Consider the following 624-residue polypeptide: (-)-beta-phellandrene synthase 1, chloroplastic (624 aa).

A chloroplast-targeting transit peptide spans 1–48 (MAIVSSVPLASKSCLHKSLISSIHKLKPFCRTIPTLGMSRPGKYVMPS). 3 residues coordinate Mg(2+): Asp375, Asp379, and Asp527. The DDXXD motif motif lies at 375–379 (DDMYD).

This sequence belongs to the terpene synthase family. Tpsd subfamily. Requires Mg(2+) as cofactor. Mn(2+) is required as a cofactor.

It localises to the plastid. Its subcellular location is the chloroplast. The catalysed reaction is (2E)-geranyl diphosphate = (-)-beta-phellandrene + diphosphate. The protein operates within terpene metabolism; oleoresin biosynthesis. Terpene synthase (TPS) involved in the biosynthesis of monoterpene natural products included in conifer oleoresin secretions and volatile emissions; these compounds contribute to biotic and abiotic stress defense against herbivores and pathogens. Catalyzes the conversion of (2E)-geranyl diphosphate (GPP) to (-)-beta-phellandrene. This Picea sitchensis (Sitka spruce) protein is (-)-beta-phellandrene synthase 1, chloroplastic.